Consider the following 81-residue polypeptide: Cytotoxin 4a (81 aa).

A signal peptide spans 1–21 (MKTLLLTLVVVTIVCLDLGYT). 4 disulfide bridges follow: C24/C42, C35/C59, C63/C74, and C75/C80.

It belongs to the three-finger toxin family. Short-chain subfamily. Type IA cytotoxin sub-subfamily. As to quaternary structure, monomer in solution; Homodimer and oligomer in the presence of negatively charged lipids forming a pore with a size ranging between 20 and 30 Angstroms. In terms of tissue distribution, expressed by the venom gland.

Its subcellular location is the secreted. It is found in the target cell membrane. Shows cytolytic activity on many different cells by forming pore in lipid membranes. In vivo, increases heart rate or kills the animal by cardiac arrest. In addition, it binds to heparin with high affinity, interacts with Kv channel-interacting protein 1 (KCNIP1) in a calcium-independent manner, and binds to integrin alpha-V/beta-3 (ITGAV/ITGB3) with moderate affinity. This is Cytotoxin 4a from Naja sputatrix (Malayan spitting cobra).